We begin with the raw amino-acid sequence, 233 residues long: Germin-like protein (233 aa).

The first 22 residues, 1–22 (MEAYKMFAFVVLLATTLYQAYA), serve as a signal peptide directing secretion. C32 and C49 are joined by a disulfide. The Cupin type-1 domain maps to 63–215 (RGLNMPANTD…RPSISMRIWS (153 aa)). 4 residues coordinate Mn(2+): H111, H113, E118, and H162.

It belongs to the germin family. Oligomer (believed to be a pentamer but probably hexamer). As to expression, expressed at high levels in unstressed roots.

The protein localises to the secreted. The protein resides in the extracellular space. It localises to the apoplast. Its function is as follows. May be involved in seed germination. In Mesembryanthemum crystallinum (Common ice plant), this protein is Germin-like protein.